The primary structure comprises 473 residues: Glutamate--tRNA ligase 2 (473 aa).

A 'HIGH' region motif is present at residues 11–21 (PSPTGYLHIGG). The segment covering 113–133 (KARAEGRPPRYDGRWRDRDPS) has biased composition (basic and acidic residues). Residues 113–136 (KARAEGRPPRYDGRWRDRDPSEAP) are disordered. The 'KMSKS' region motif lies at 240 to 244 (KLSKR). Lys243 is an ATP binding site.

Belongs to the class-I aminoacyl-tRNA synthetase family. Glutamate--tRNA ligase type 1 subfamily. In terms of assembly, monomer.

The protein localises to the cytoplasm. It carries out the reaction tRNA(Glu) + L-glutamate + ATP = L-glutamyl-tRNA(Glu) + AMP + diphosphate. Functionally, catalyzes the attachment of glutamate to tRNA(Glu) in a two-step reaction: glutamate is first activated by ATP to form Glu-AMP and then transferred to the acceptor end of tRNA(Glu). In Brucella suis biovar 1 (strain 1330), this protein is Glutamate--tRNA ligase 2.